Here is a 540-residue protein sequence, read N- to C-terminus: Phosphoenolpyruvate carboxykinase (ATP) (540 aa).

Arginine 65 is a binding site for substrate. Lysine 87 is subject to N6-acetyllysine. Positions 207 and 213 each coordinate substrate. Residues lysine 213, histidine 232, and glycine 248 to threonine 256 contribute to the ATP site. Mn(2+) contacts are provided by lysine 213 and histidine 232. Aspartate 269 provides a ligand contact to Mn(2+). Residues glutamate 297, arginine 333, arginine 449 to isoleucine 450, and threonine 455 each bind ATP. Arginine 333 is a binding site for substrate. Position 523 is an N6-acetyllysine (lysine 523).

The protein belongs to the phosphoenolpyruvate carboxykinase (ATP) family. As to quaternary structure, monomer. Requires Mn(2+) as cofactor.

The protein localises to the cytoplasm. The catalysed reaction is oxaloacetate + ATP = phosphoenolpyruvate + ADP + CO2. It participates in carbohydrate biosynthesis; gluconeogenesis. In terms of biological role, involved in the gluconeogenesis. Catalyzes the conversion of oxaloacetate (OAA) to phosphoenolpyruvate (PEP) through direct phosphoryl transfer between the nucleoside triphosphate and OAA. The sequence is that of Phosphoenolpyruvate carboxykinase (ATP) from Escherichia fergusonii (strain ATCC 35469 / DSM 13698 / CCUG 18766 / IAM 14443 / JCM 21226 / LMG 7866 / NBRC 102419 / NCTC 12128 / CDC 0568-73).